The sequence spans 473 residues: Photosystem II CP43 reaction center protein (473 aa).

A propeptide spanning residues Met-1 to Glu-14 is cleaved from the precursor. N-acetylthreonine is present on Thr-15. Thr-15 is subject to Phosphothreonine. The next 5 helical transmembrane spans lie at Leu-69–Ala-93, Leu-134–Asn-155, Lys-178–Thr-200, Lys-255–Ser-275, and Trp-291–Ala-312. Residue Glu-367 coordinates [CaMn4O5] cluster. A helical membrane pass occupies residues Arg-447–Pro-471.

This sequence belongs to the PsbB/PsbC family. PsbC subfamily. PSII is composed of 1 copy each of membrane proteins PsbA, PsbB, PsbC, PsbD, PsbE, PsbF, PsbH, PsbI, PsbJ, PsbK, PsbL, PsbM, PsbT, PsbX, PsbY, PsbZ, Psb30/Ycf12, at least 3 peripheral proteins of the oxygen-evolving complex and a large number of cofactors. It forms dimeric complexes. Binds multiple chlorophylls and provides some of the ligands for the Ca-4Mn-5O cluster of the oxygen-evolving complex. It may also provide a ligand for a Cl- that is required for oxygen evolution. PSII binds additional chlorophylls, carotenoids and specific lipids. is required as a cofactor.

The protein resides in the plastid membrane. In terms of biological role, one of the components of the core complex of photosystem II (PSII). It binds chlorophyll and helps catalyze the primary light-induced photochemical processes of PSII. PSII is a light-driven water:plastoquinone oxidoreductase, using light energy to abstract electrons from H(2)O, generating O(2) and a proton gradient subsequently used for ATP formation. The protein is Photosystem II CP43 reaction center protein of Cuscuta obtusiflora (Peruvian dodder).